Here is a 946-residue protein sequence, read N- to C-terminus: Inhibin beta chain (946 aa).

Disordered regions lie at residues 115-142 (VADRSQASSRTVHVSVPTTPNETPSSTS) and 174-194 (KSRNRKRQRRRRRRRNHRRRR). Positions 128-142 (VSVPTTPNETPSSTS) are enriched in low complexity. N-linked (GlcNAc...) asparagine glycosylation is found at N208, N217, N271, and N389. The interval 436-462 (SPGSHLFNGRGGRTDQRSERDPSHHKY) is disordered. Positions 447-459 (GRTDQRSERDPSH) are enriched in basic and acidic residues. N-linked (GlcNAc...) asparagine glycans are attached at residues N471, N484, N542, N561, N566, N732, and N804. 4 cysteine pairs are disulfide-bonded: C837/C846, C845/C912, C874/C943, and C878/C945.

Belongs to the TGF-beta family. Homodimer or heterodimer; disulfide-linked. In terms of processing, cleaved in vitro by metalloproteases tok and tld to produce a 30 kDa product. In terms of tissue distribution, widely expressed in larval brains.

Its subcellular location is the secreted. In terms of biological role, controls several aspects of neuronal morphogenesis; essential for optic lobe development, EcR-B1 expression in larval brains, mushroom body remodeling, dorsal neuron morphogenesis and motoneuron axon guidance. Ligands Actbeta and daw act redundantly through the Activin receptor Babo and its transcriptional mediator Smad2 (Smox), to regulate neuroblast numbers and proliferation rates in the developing larval brain. This Drosophila melanogaster (Fruit fly) protein is Inhibin beta chain (Actbeta).